The chain runs to 248 residues: Coproheme decarboxylase (248 aa).

Residues arginine 130, 144-148 (YPMDK), histidine 171, glutamine 184, and serine 222 each bind Fe-coproporphyrin III. Tyrosine 144 is a catalytic residue.

This sequence belongs to the ChdC family. Type 1 subfamily. The cofactor is Fe-coproporphyrin III.

The catalysed reaction is Fe-coproporphyrin III + 2 H2O2 + 2 H(+) = heme b + 2 CO2 + 4 H2O. It carries out the reaction Fe-coproporphyrin III + H2O2 + H(+) = harderoheme III + CO2 + 2 H2O. It catalyses the reaction harderoheme III + H2O2 + H(+) = heme b + CO2 + 2 H2O. It participates in porphyrin-containing compound metabolism; protoheme biosynthesis. Involved in coproporphyrin-dependent heme b biosynthesis. Catalyzes the decarboxylation of Fe-coproporphyrin III (coproheme) to heme b (protoheme IX), the last step of the pathway. The reaction occurs in a stepwise manner with a three-propionate intermediate. This is Coproheme decarboxylase from Geobacillus thermodenitrificans (strain NG80-2).